We begin with the raw amino-acid sequence, 477 residues long: Glutamate--tRNA ligase 2 (477 aa).

The short motif at 12–22 (PSPTGRMHLGN) is the 'HIGH' region element. Positions 109, 111, 136, and 138 each coordinate Zn(2+). A 'KMSKS' region motif is present at residues 253–257 (PLSKR). Lys-256 is an ATP binding site.

Belongs to the class-I aminoacyl-tRNA synthetase family. Glutamate--tRNA ligase type 1 subfamily. As to quaternary structure, monomer. Zn(2+) is required as a cofactor.

It is found in the cytoplasm. It catalyses the reaction tRNA(Glu) + L-glutamate + ATP = L-glutamyl-tRNA(Glu) + AMP + diphosphate. Catalyzes the attachment of glutamate to tRNA(Glu) in a two-step reaction: glutamate is first activated by ATP to form Glu-AMP and then transferred to the acceptor end of tRNA(Glu). The protein is Glutamate--tRNA ligase 2 of Alkalilimnicola ehrlichii (strain ATCC BAA-1101 / DSM 17681 / MLHE-1).